Here is a 257-residue protein sequence, read N- to C-terminus: NH(3)-dependent NAD(+) synthetase (257 aa).

40–47 (GISGGIDS) lines the ATP pocket. Aspartate 46 contacts Mg(2+). Arginine 121 provides a ligand contact to deamido-NAD(+). Threonine 141 contacts ATP. Glutamate 146 serves as a coordination point for Mg(2+). Deamido-NAD(+)-binding residues include lysine 154 and aspartate 161. Residues lysine 170 and serine 192 each contribute to the ATP site. Position 238-239 (238-239 (HK)) interacts with deamido-NAD(+).

Belongs to the NAD synthetase family. As to quaternary structure, homodimer.

It carries out the reaction deamido-NAD(+) + NH4(+) + ATP = AMP + diphosphate + NAD(+) + H(+). Its pathway is cofactor biosynthesis; NAD(+) biosynthesis; NAD(+) from deamido-NAD(+) (ammonia route): step 1/1. Its function is as follows. Catalyzes the ATP-dependent amidation of deamido-NAD to form NAD. Uses ammonia as a nitrogen source. In Mycoplasmopsis pulmonis (strain UAB CTIP) (Mycoplasma pulmonis), this protein is NH(3)-dependent NAD(+) synthetase.